The chain runs to 115 residues: NADH-ubiquinone oxidoreductase chain 3 (115 aa).

Helical transmembrane passes span 5–25 (LTLM…FWLP), 55–75 (FFLV…LLPL), and 86–106 (LMLT…AYEW).

The protein belongs to the complex I subunit 3 family. Core subunit of respiratory chain NADH dehydrogenase (Complex I) which is composed of 45 different subunits. Interacts with TMEM186. Interacts with TMEM242.

The protein localises to the mitochondrion inner membrane. The enzyme catalyses a ubiquinone + NADH + 5 H(+)(in) = a ubiquinol + NAD(+) + 4 H(+)(out). Core subunit of the mitochondrial membrane respiratory chain NADH dehydrogenase (Complex I) which catalyzes electron transfer from NADH through the respiratory chain, using ubiquinone as an electron acceptor. Essential for the catalytic activity of complex I. This chain is NADH-ubiquinone oxidoreductase chain 3, found in Avahi cleesei (Cleese's woolly lemur).